The following is a 381-amino-acid chain: MKAVHFGAGNIGRGFIGKLLSDANVAVTFADIDKPLVDQLSHDQSYKVKVVGSQCQVDTVTHVTAVNSASQDVIDRIVHTDLVTTAVGPNVLDIIAKTIATGLAQRFEANNEKSLNIIACENMVRGTTHLKNEVYKHLDEQYHARADALVGFVDSAVDRIVPPSEAANDPLEVTVESFSEWIVDKQQFKGDIPVIEGMEMTDNLMAFVERKLFTLNTGHIMTAYLGALKGHETVRDAIEDNEIREQVKAAMQESGEVLIKRYGFDREVHNAYIEKILGRFANPYLRDEIDRVGRQPIRKLGENDRLIKPLLGTIEYGTENKTLLKGIAAAFMYTNESDPQAVELQTSLKEQGLRPTLAHYTGIDADSKEAKTIETIFLQLS.

Residue 3–14 coordinates NAD(+); it reads AVHFGAGNIGRG.

Belongs to the mannitol dehydrogenase family.

It catalyses the reaction D-mannitol 1-phosphate + NAD(+) = beta-D-fructose 6-phosphate + NADH + H(+). The protein is Mannitol-1-phosphate 5-dehydrogenase of Photobacterium profundum (strain SS9).